Here is a 242-residue protein sequence, read N- to C-terminus: uncharacterized protein (242 aa).

This is an uncharacterized protein from Agrobacterium vitis (Rhizobium vitis).